Consider the following 349-residue polypeptide: tRNA pseudouridine synthase D (349 aa).

A substrate-binding site is contributed by F27. Residue D80 is the Nucleophile of the active site. N129 contributes to the substrate binding site. Residues 155–303 enclose the TRUD domain; sequence GVPNYFGAQR…VEAARRAMLL (149 aa). F329 provides a ligand contact to substrate.

This sequence belongs to the pseudouridine synthase TruD family.

The catalysed reaction is uridine(13) in tRNA = pseudouridine(13) in tRNA. Its function is as follows. Responsible for synthesis of pseudouridine from uracil-13 in transfer RNAs. The polypeptide is tRNA pseudouridine synthase D (Escherichia coli O6:H1 (strain CFT073 / ATCC 700928 / UPEC)).